A 195-amino-acid chain; its full sequence is NADH-quinone oxidoreductase subunit C (195 aa).

It belongs to the complex I 30 kDa subunit family. As to quaternary structure, NDH-1 is composed of 14 different subunits. Subunits NuoB, C, D, E, F, and G constitute the peripheral sector of the complex.

Its subcellular location is the cell inner membrane. The enzyme catalyses a quinone + NADH + 5 H(+)(in) = a quinol + NAD(+) + 4 H(+)(out). Its function is as follows. NDH-1 shuttles electrons from NADH, via FMN and iron-sulfur (Fe-S) centers, to quinones in the respiratory chain. The immediate electron acceptor for the enzyme in this species is believed to be ubiquinone. Couples the redox reaction to proton translocation (for every two electrons transferred, four hydrogen ions are translocated across the cytoplasmic membrane), and thus conserves the redox energy in a proton gradient. This chain is NADH-quinone oxidoreductase subunit C, found in Laribacter hongkongensis (strain HLHK9).